A 457-amino-acid chain; its full sequence is MSWNQYPGGGHHQQGGYGYRPPPPQWAQQGPPPPPNMGYRPPPPPQAYYNNPPPPQQYQRPAPQQNGYQQGGYQQQQQSQGNYRTSNGGYVPPTGAPVEASYHHTGAGYTPPSGTPQRTSAPYGAGAPIRPPSQAQHYGPQLQGQGGQSAQPYFQYSQCTGKKKALCIGINYVGSSSALAGCINDAHNVQKFLIERYGYKSEDIVMLTDDARNPRQIPTRANILAAMHWLVQGAQPNDSLFFHYSGHGGQTPDLDGDEDDGYDEVIYPLDFKTAGHIVDDDMHNIMVRPLPAGCRLTAIYDSCHSGTALDLPYIYSTEGVIKEPNLLAEAGQGLLSAGMSYLRGDTGGMLQGIMGIGKKVMNQNSGAMEKARQTKTSPADVISWSGCKDSQTSADTQEAGRATGAMSYAFIAALTKYPQQSYVQLLNTIRDELKGKYDQKPQLSASHPMDTNILFIC.

The segment at 1 to 149 is disordered; that stretch reads MSWNQYPGGG…PQLQGQGGQS (149 aa). Residues 7–18 show a composition bias toward gly residues; it reads PGGGHHQQGGYG. Residues 20–56 are compositionally biased toward pro residues; the sequence is RPPPPQWAQQGPPPPPNMGYRPPPPPQAYYNNPPPPQ. The segment covering 57-83 has biased composition (low complexity); the sequence is QYQRPAPQQNGYQQGGYQQQQQSQGNY. Residues H247 and C303 contribute to the active site.

Belongs to the peptidase C14B family.

Functionally, involved in cell death (apoptosis). The polypeptide is Metacaspase-1 (MCA1) (Cryptococcus neoformans var. neoformans serotype D (strain JEC21 / ATCC MYA-565) (Filobasidiella neoformans)).